The primary structure comprises 427 residues: Zinc-finger homeodomain protein 7 (427 aa).

2 disordered regions span residues 1–60 and 91–118; these read MEYK…SLMD and LHAA…QRHH. Over residues 10-28 the composition is skewed to acidic residues; sequence EEEEEEEEEEDDEEEDEEE. Positions 50 to 60 are enriched in low complexity; sequence SSASSPSSLMD. The segment at 163-211 adopts a ZF-HD dimerization-type; degenerate zinc-finger fold; sequence YRECLKNHAARMGAHVLDGCGEFMSSPGDGAAALACAACGCHRSFHRRE. Disordered stretches follow at residues 264–320 and 375–427; these read KRPP…SKKR and HLAK…QHDA. 2 stretches are compositionally biased toward low complexity: residues 271-283 and 301-312; these read VSPA…LAES and HAAAVVAASASA. A DNA-binding region (homeobox) is located at residues 318-381; that stretch reads KKRFRTKFTA…NNKHLAKTPP (64 aa). Pro residues predominate over residues 380 to 401; it reads PPSPTSQPPPPPLHHDPSPPPP. Basic residues predominate over residues 402–416; sequence PHHHHHHHHHHHPPQ. A compositionally biased stretch (low complexity) spans 417 to 427; that stretch reads HHQQQQQQHDA.

Homo- and heterodimer with other ZFHD proteins.

It localises to the nucleus. Functionally, putative transcription factor. This is Zinc-finger homeodomain protein 7 (ZHD7) from Oryza sativa subsp. japonica (Rice).